Reading from the N-terminus, the 55-residue chain is Large ribosomal subunit protein bL33 (55 aa).

It belongs to the bacterial ribosomal protein bL33 family.

The polypeptide is Large ribosomal subunit protein bL33 (Dehalococcoides mccartyi (strain ATCC BAA-2100 / JCM 16839 / KCTC 5957 / BAV1)).